We begin with the raw amino-acid sequence, 228 residues long: UPF0173 metal-dependent hydrolase Lm4b_01588 (228 aa).

It belongs to the UPF0173 family.

This is UPF0173 metal-dependent hydrolase Lm4b_01588 from Listeria monocytogenes serotype 4b (strain CLIP80459).